The chain runs to 298 residues: Protoheme IX farnesyltransferase (298 aa).

The next 9 membrane-spanning stretches (helical) occupy residues 24 to 44 (VIQL…PGLP), 49 to 69 (LQLA…AAAF), 100 to 120 (LLFS…WVNP), 121 to 141 (LTMW…TVIL), 149 to 169 (IVIG…AMAG), 175 to 195 (ALIL…ALAL), 220 to 240 (LMVL…YVYG), 244 to 264 (WLYL…AFYL), and 277 to 297 (FRFS…DHYL).

The protein belongs to the UbiA prenyltransferase family. Protoheme IX farnesyltransferase subfamily.

It localises to the cell inner membrane. It catalyses the reaction heme b + (2E,6E)-farnesyl diphosphate + H2O = Fe(II)-heme o + diphosphate. The protein operates within porphyrin-containing compound metabolism; heme O biosynthesis; heme O from protoheme: step 1/1. Functionally, converts heme B (protoheme IX) to heme O by substitution of the vinyl group on carbon 2 of heme B porphyrin ring with a hydroxyethyl farnesyl side group. This Albidiferax ferrireducens (strain ATCC BAA-621 / DSM 15236 / T118) (Rhodoferax ferrireducens) protein is Protoheme IX farnesyltransferase.